A 692-amino-acid chain; its full sequence is Elongation factor G (692 aa).

In terms of domain architecture, tr-type G spans 8–282 (PNTRNIGIMA…NVVAYLPSPV (275 aa)). GTP-binding positions include 17–24 (AHIDAGKT), 81–85 (DTPGH), and 135–138 (NKMD).

The protein belongs to the TRAFAC class translation factor GTPase superfamily. Classic translation factor GTPase family. EF-G/EF-2 subfamily.

It localises to the cytoplasm. Catalyzes the GTP-dependent ribosomal translocation step during translation elongation. During this step, the ribosome changes from the pre-translocational (PRE) to the post-translocational (POST) state as the newly formed A-site-bound peptidyl-tRNA and P-site-bound deacylated tRNA move to the P and E sites, respectively. Catalyzes the coordinated movement of the two tRNA molecules, the mRNA and conformational changes in the ribosome. This Brevibacillus brevis (strain 47 / JCM 6285 / NBRC 100599) protein is Elongation factor G.